The chain runs to 196 residues: Peptidyl-tRNA hydrolase (196 aa).

His15 contacts tRNA. His20 (proton acceptor) is an active-site residue. TRNA is bound by residues Tyr66, Asn68, and Asn114.

This sequence belongs to the PTH family. Monomer.

The protein localises to the cytoplasm. The enzyme catalyses an N-acyl-L-alpha-aminoacyl-tRNA + H2O = an N-acyl-L-amino acid + a tRNA + H(+). Hydrolyzes ribosome-free peptidyl-tRNAs (with 1 or more amino acids incorporated), which drop off the ribosome during protein synthesis, or as a result of ribosome stalling. Functionally, catalyzes the release of premature peptidyl moieties from peptidyl-tRNA molecules trapped in stalled 50S ribosomal subunits, and thus maintains levels of free tRNAs and 50S ribosomes. The chain is Peptidyl-tRNA hydrolase from Polynucleobacter necessarius subsp. necessarius (strain STIR1).